Here is a 338-residue protein sequence, read N- to C-terminus: 1-aminocyclopropane-1-carboxylate deaminase (338 aa).

Position 51 is an N6-(pyridoxal phosphate)lysine (K51). Catalysis depends on S78, which acts as the Nucleophile.

This sequence belongs to the ACC deaminase/D-cysteine desulfhydrase family. As to quaternary structure, homotrimer. Requires pyridoxal 5'-phosphate as cofactor.

It carries out the reaction 1-aminocyclopropane-1-carboxylate + H2O = 2-oxobutanoate + NH4(+). Its function is as follows. Catalyzes a cyclopropane ring-opening reaction, the irreversible conversion of 1-aminocyclopropane-1-carboxylate (ACC) to ammonia and alpha-ketobutyrate. Allows growth on ACC as a nitrogen source. The sequence is that of 1-aminocyclopropane-1-carboxylate deaminase from Variovorax paradoxus (strain S110).